Reading from the N-terminus, the 343-residue chain is CCN family member 3 (343 aa).

Positions 1 to 18 are cleaved as a signal peptide; sequence MTPHLALCFILLIQQVAS. In terms of domain architecture, IGFBP N-terminal spans 19–90; it reads QKCPSQCDQC…RMETGTCMAL (72 aa). Cystine bridges form between Cys-21–Cys-46, Cys-25–Cys-48, Cys-28–Cys-49, Cys-35–Cys-52, Cys-60–Cys-74, and Cys-66–Cys-87. Residues 93 to 159 enclose the VWFC domain; it reads NSCVFDGVVY…GECCEKWVCD (67 aa). Residues 190–235 enclose the TSP type-1 domain; the sequence is ACIAQTTEWSACSKTCGMGVSSRVTNRNARCEMQKQIRLCMVRSCE. Intrachain disulfides connect Cys-249–Cys-286, Cys-266–Cys-300, Cys-277–Cys-316, Cys-280–Cys-318, and Cys-285–Cys-322. Residues 249 to 323 enclose the CTCK domain; sequence CVRVRKTTKP…STCVCHYNCP (75 aa). Asn-265 is a glycosylation site (N-linked (GlcNAc...) asparagine).

Belongs to the CCN family.

Its subcellular location is the secreted. The protein localises to the cytoplasm. It is found in the cell junction. The protein resides in the gap junction. In terms of biological role, immediate-early protein playing a role in various cellular processes including proliferation, adhesion, migration, differentiation and survival. Acts by binding to integrins or membrane receptors such as NOTCH1. In Xenopus laevis (African clawed frog), this protein is CCN family member 3 (ccn3).